Consider the following 82-residue polypeptide: MVTIRLARHGAKKRPFYQIVVADSRFKATGRYIEKVGFFNPTAQGQEEGLRLDLDRVGHWVEQGAGLSDRVAKLVKDAKKAA.

Belongs to the bacterial ribosomal protein bS16 family.

The sequence is that of Small ribosomal subunit protein bS16 from Aliivibrio fischeri (strain ATCC 700601 / ES114) (Vibrio fischeri).